A 333-amino-acid polypeptide reads, in one-letter code: Probable G-protein coupled receptor 174 (333 aa).

The Extracellular segment spans residues 1-27 (MPANYTCTRPDGDNTDFRYFIYAVTYT). Asn4 carries an N-linked (GlcNAc...) asparagine glycan. The helical transmembrane segment at 28 to 48 (VILVPGLIGNILALWVFYGYM) threads the bilayer. The Cytoplasmic segment spans residues 49 to 53 (KETKR). The chain crosses the membrane as a helical span at residues 54–74 (AVIFMINLAIADLLQVLSLPL). Residues 75-91 (RIFYYLNHDWPFGPGLC) are Extracellular-facing. Cysteines 91 and 168 form a disulfide. The helical transmembrane segment at 92–112 (MFCFYLKYVNMYASIYFLVCI) threads the bilayer. The Cytoplasmic portion of the chain corresponds to 113–134 (SVRRFWFLMYPFRFHDCKQKYD). Residues 135 to 155 (LYISIAGWLIICLACVLFPLL) traverse the membrane as a helical segment. Over 156–182 (RTSDDTSGNRTKCFVDLPTRNVNLAQS) the chain is Extracellular. Asn164 is a glycosylation site (N-linked (GlcNAc...) asparagine). A helical membrane pass occupies residues 183 to 203 (VVMMTIGELIGFVTPLLIVLY). Topologically, residues 204–231 (CTWKTVLSLQDKYPMAQDLGEKQKALKM) are cytoplasmic. Residues 232–252 (ILTCAGVFLICFAPYHFSFPL) form a helical membrane-spanning segment. The Extracellular portion of the chain corresponds to 253–269 (DFLVKSNEIKSCLARRV). The helical transmembrane segment at 270–290 (ILIFHSVALCLASLNSCLDPV) threads the bilayer. Residues 291–333 (IYYFSTNEFRRRLSRQDLHDSIQLHAKSFVSNHTASTMTPELC) are Cytoplasmic-facing.

Belongs to the G-protein coupled receptor 1 family. As to quaternary structure, interacts with GNA13. Interacts with CCL21.

The protein resides in the cell membrane. Functionally, G-protein-coupled receptor of lysophosphatidylserine (LysoPS) that plays different roles in immune response. Plays a negative role in regulatory T-cell accumulation and homeostasis. Under inflammatory conditions where LysoPS production increases, contributes to the down-regulation of regulatory T-cell activity to favor effector response. Mediates the suppression of IL-2 production in activated T-lymphocytes leading to inhibition of growth, proliferation and differentiation of T-cells. Mechanistically, acts via G(s)-containing heterotrimeric G proteins to trigger elevated cyclic AMP levels and protein kinase A/PKA activity, which may in turn act to antagonize proximal TCR signaling. Plays an important role in the initial period of sepsis through the regulation of macrophage polarization and pro- and anti-inflammatory cytokine secretions. Upon testosterone treatment, acts as a receptor for CCL21 and subsequently triggers through G(q)-alpha and G(12)/G(13) proteins a calcium flux leading to chemotactic effects on activated B-cells. Signals via GNA13 and PKA to promote CD86 up-regulation by follicular B-cells. This Homo sapiens (Human) protein is Probable G-protein coupled receptor 174 (GPR174).